The primary structure comprises 472 residues: Selenium-binding protein 2 (472 aa).

At Ser467 the chain carries Phosphoserine.

Belongs to the selenium-binding protein family. Post-translationally, the N-terminus is blocked. Mainly expressed in liver.

It is found in the nucleus. Its subcellular location is the cytoplasm. The protein resides in the cytosol. It localises to the membrane. In terms of biological role, selenium- and acetaminophen-binding protein which may be involved in the sensing of reactive xenobiotics in the cytoplasm. May be involved in intra-Golgi protein transport. The polypeptide is Selenium-binding protein 2 (Selenbp2) (Mus musculus (Mouse)).